Reading from the N-terminus, the 507-residue chain is Arabinose import ATP-binding protein AraG (507 aa).

2 consecutive ABC transporter domains span residues 14 to 249 and 249 to 505; these read LRFN…MVGR and RDIQ…LPRT. 46–53 is a binding site for ATP; the sequence is GENGAGKS.

It belongs to the ABC transporter superfamily. Arabinose importer (TC 3.A.1.2.2) family. The complex is composed of two ATP-binding proteins (AraG), two transmembrane proteins (AraH) and a solute-binding protein (AraF).

Its subcellular location is the cell inner membrane. It carries out the reaction L-arabinose(out) + ATP + H2O = L-arabinose(in) + ADP + phosphate + H(+). Functionally, part of the ABC transporter complex AraFGH involved in arabinose import. Responsible for energy coupling to the transport system. The polypeptide is Arabinose import ATP-binding protein AraG (Pseudomonas syringae pv. syringae (strain B728a)).